A 195-amino-acid chain; its full sequence is MSEIKLIVGLANPGAEYAQTRHNAGAWYVQELARICGVTLVPDSKYFGLTARAVLQGKDVRLLIPTTYMNLSGKAVGALANFFRITPEEILVAHDELDMPPGVAKFKLGGGHGGHNGLKDIIAKLANDKNFYRLRIGIGHPGDKNQVSGYVLGKAPAKEQELIEAAIDEAVRSTEILYKENMVKAMTRLHSFKAE.

Position 17 (Y17) interacts with tRNA. The active-site Proton acceptor is the H22. Y68, N70, and N116 together coordinate tRNA.

The protein belongs to the PTH family. In terms of assembly, monomer.

It localises to the cytoplasm. The enzyme catalyses an N-acyl-L-alpha-aminoacyl-tRNA + H2O = an N-acyl-L-amino acid + a tRNA + H(+). Hydrolyzes ribosome-free peptidyl-tRNAs (with 1 or more amino acids incorporated), which drop off the ribosome during protein synthesis, or as a result of ribosome stalling. In terms of biological role, catalyzes the release of premature peptidyl moieties from peptidyl-tRNA molecules trapped in stalled 50S ribosomal subunits, and thus maintains levels of free tRNAs and 50S ribosomes. In Shewanella putrefaciens (strain CN-32 / ATCC BAA-453), this protein is Peptidyl-tRNA hydrolase.